The following is a 677-amino-acid chain: DNA ligase (677 aa).

Residues 35 to 39 (DAEYD), 84 to 85 (SL), and Glu-116 each bind NAD(+). The N6-AMP-lysine intermediate role is filled by Lys-118. NAD(+) contacts are provided by Arg-139, Glu-176, Lys-295, and Lys-319. Cys-413, Cys-416, Cys-431, and Cys-437 together coordinate Zn(2+). Residues 596–677 (LDELPLAGQV…MLAMFADLEG (82 aa)) form the BRCT domain.

The protein belongs to the NAD-dependent DNA ligase family. LigA subfamily. Requires Mg(2+) as cofactor. It depends on Mn(2+) as a cofactor.

The catalysed reaction is NAD(+) + (deoxyribonucleotide)n-3'-hydroxyl + 5'-phospho-(deoxyribonucleotide)m = (deoxyribonucleotide)n+m + AMP + beta-nicotinamide D-nucleotide.. Its function is as follows. DNA ligase that catalyzes the formation of phosphodiester linkages between 5'-phosphoryl and 3'-hydroxyl groups in double-stranded DNA using NAD as a coenzyme and as the energy source for the reaction. It is essential for DNA replication and repair of damaged DNA. This chain is DNA ligase, found in Pseudoalteromonas atlantica (strain T6c / ATCC BAA-1087).